A 361-amino-acid chain; its full sequence is Phospho-N-acetylmuramoyl-pentapeptide-transferase (361 aa).

The next 10 membrane-spanning stretches (helical) occupy residues 28 to 48 (LAVLVTLSLSFLIGPRLIKFL), 74 to 94 (TMGGIMIILSSCFSTLLLADL), 99 to 119 (IWITLFGFVSFGIIGFLDDYA), 135 to 155 (LLLQGIISLIVCILLEYTIDS), 167 to 187 (SLSMDLGYLYIFFAIFVIVGA), 203 to 223 (VPIALTAGSFALISYLVGNLI), 236 to 256 (TGELTIFCASIVGSCLGFLWF), 263 to 283 (VFMGDTGSLSLGGVLGIISVI), 288 to 308 (IVLGIVGGLFVIETISVIMQV), and 338 to 358 (KVVIRFWIISLIFVLIGLSSL).

It belongs to the glycosyltransferase 4 family. MraY subfamily. Requires Mg(2+) as cofactor.

The protein resides in the cell inner membrane. It carries out the reaction UDP-N-acetyl-alpha-D-muramoyl-L-alanyl-gamma-D-glutamyl-meso-2,6-diaminopimeloyl-D-alanyl-D-alanine + di-trans,octa-cis-undecaprenyl phosphate = di-trans,octa-cis-undecaprenyl diphospho-N-acetyl-alpha-D-muramoyl-L-alanyl-D-glutamyl-meso-2,6-diaminopimeloyl-D-alanyl-D-alanine + UMP. Its pathway is cell wall biogenesis; peptidoglycan biosynthesis. Functionally, catalyzes the initial step of the lipid cycle reactions in the biosynthesis of the cell wall peptidoglycan: transfers peptidoglycan precursor phospho-MurNAc-pentapeptide from UDP-MurNAc-pentapeptide onto the lipid carrier undecaprenyl phosphate, yielding undecaprenyl-pyrophosphoryl-MurNAc-pentapeptide, known as lipid I. This Rickettsia bellii (strain RML369-C) protein is Phospho-N-acetylmuramoyl-pentapeptide-transferase.